A 474-amino-acid polypeptide reads, in one-letter code: PTS system N-acetylmuramic acid-specific EIIBC component (474 aa).

The PTS EIIB type-1 domain maps to 1 to 89 (MAKEISSELL…SELLGDAPVQ (89 aa)). At 1-123 (MAKEISSELL…LAKFATIFTP (123 aa)) the chain is on the cytoplasmic side. Cysteine 29 (phosphocysteine intermediate; for EIIB activity) is an active-site residue. The PTS EIIC type-1 domain maps to 115–474 (AKFATIFTPL…LFGCRNVNLD (360 aa)). A helical transmembrane segment spans residues 124-144 (LIPGFIAAGLLLGIATLIATV). Topologically, residues 145 to 157 (MHVPADAQGTLPD) are periplasmic. The chain crosses the membrane as a helical span at residues 158–178 (ALNFMKVFSKGLFTFLVILVG). At 179 to 180 (YN) the chain is on the cytoplasmic side. A helical membrane pass occupies residues 181–201 (AAQAFGGTGVNGAIIAALFLL). Topologically, residues 202–217 (GYNPAATTGYYAGFHD) are periplasmic. A helical membrane pass occupies residues 218 to 238 (FFGLPIDPRGNIIGVLIAAWA). Topologically, residues 239–260 (CARIEGMVRRFMPDDLDMLLTS) are cytoplasmic. The helical transmembrane segment at 261–281 (LITLLITATLAYLIIMPLGGW) threads the bilayer. At 282–301 (LFEGMSWLFMHLNSNPFGCA) the chain is on the periplasmic side. A helical membrane pass occupies residues 302–322 (VLAGLFLIAVVFGVHQGFIPV). The Cytoplasmic segment spans residues 323–334 (YLALMDSQGFNS). Residues 335–355 (LFPILSMAGAGQVGAALALYW) traverse the membrane as a helical segment. At 356-368 (RAQPHSALRSQVR) the chain is on the periplasmic side. The helical transmembrane segment at 369–389 (GAIIPGLLGVGEPLIYGVTLP) threads the bilayer. At 390–393 (RMKP) the chain is on the cytoplasmic side. The chain crosses the membrane as a helical span at residues 394–414 (FVTACLGGAAGGLFIGLIAWW). At 415–440 (GLPMGLNSAFGPSGLVALPLMTSAQG) the chain is on the periplasmic side. The helical transmembrane segment at 441-461 (ILPAMAVYAGGILVAWVCGFI) threads the bilayer. Topologically, residues 462-474 (FTTLFGCRNVNLD) are cytoplasmic.

It is found in the cell inner membrane. It carries out the reaction N-acetyl-beta-D-muramate(out) + N(pros)-phospho-L-histidyl-[protein] = N-acetyl-beta-D-muramate 6-phosphate(in) + L-histidyl-[protein]. Its function is as follows. The phosphoenolpyruvate-dependent sugar phosphotransferase system (sugar PTS), a major carbohydrate active transport system, catalyzes the phosphorylation of incoming sugar substrates concomitantly with their translocation across the cell membrane. This system is involved in N-acetylmuramic acid (MurNAc) transport, yielding cytoplasmic MurNAc-6-P. Is also able to take up anhydro-N-acetylmuramic acid (anhMurNAc), but cannot phosphorylate the carbon 6, probably because of the 1,6-anhydro ring. The polypeptide is PTS system N-acetylmuramic acid-specific EIIBC component (murP) (Shigella flexneri).